Consider the following 30-residue polypeptide: Rothein 3.1 (30 aa).

The residue at position 30 (L30) is a Leucine amide.

Expressed by the skin dorsal glands.

Its subcellular location is the secreted. Lacks antimicrobial activity. Does not inhibit the formation of NO by neuronal nitric oxide. The polypeptide is Rothein 3.1 (Litoria rothii (Roth's tree frog)).